A 39-amino-acid chain; its full sequence is Potassium channel toxin alpha-KTx 31.1 (39 aa).

Cystine bridges form between Cys7-Cys30, Cys13-Cys35, and Cys17-Cys37.

Belongs to the short scorpion toxin superfamily. Potassium channel inhibitor family. Alpha-KTx 31 subfamily. Expressed by the venom gland.

The protein resides in the secreted. In terms of biological role, voltage-gated potassium channel inhibitor. 1 uM of the native toxin inhibits rat Kv1.2/KCNA2 (100% inhibition), and drosophila Shaker IR/Sh (100%), human Kv1.3/KCNA3 (83%), rat Kv1.1/KCNA1 (32%) and rat Kv1.6/KCNA6 (21%). The polypeptide is Potassium channel toxin alpha-KTx 31.1 (Buthus occitanus tunetanus (Common European scorpion)).